The primary structure comprises 247 residues: tRNA (guanine-N(7)-)-methyltransferase (247 aa).

Residues G70, 93 to 94 (EI), 128 to 129 (NA), and L148 contribute to the S-adenosyl-L-methionine site. D151 is a catalytic residue. 226–228 (SEE) is a binding site for S-adenosyl-L-methionine.

The protein belongs to the class I-like SAM-binding methyltransferase superfamily. TrmB family.

The protein localises to the nucleus. It carries out the reaction guanosine(46) in tRNA + S-adenosyl-L-methionine = N(7)-methylguanosine(46) in tRNA + S-adenosyl-L-homocysteine. It functions in the pathway tRNA modification; N(7)-methylguanine-tRNA biosynthesis. Functionally, catalyzes the formation of N(7)-methylguanine at position 46 (m7G46) in tRNA. The chain is tRNA (guanine-N(7)-)-methyltransferase from Drosophila persimilis (Fruit fly).